The following is a 297-amino-acid chain: Superoxide dismutase 1 copper chaperone (297 aa).

Cys-11 provides a ligand contact to Cu cation. Positions 222 to 263 (GSSCCSKKDSSPSEKPSCCSQEKKSCCSSKKPSCCSQEKKGC) are disordered. The span at 234-257 (SEKPSCCSQEKKSCCSSKKPSCCS) shows a compositional bias: low complexity.

The protein belongs to the CCS1 family.

Its subcellular location is the cytoplasm. Functionally, copper chaperone for superoxide dismutase 1 (sod1). Binds copper ions and delivers them specifically to sod1. Also has a role in cell protection against copper ion toxicity during conditions of copper excess. The C-terminal region is thought to act specifically in this sequestration role. This is Superoxide dismutase 1 copper chaperone (ccs1) from Schizosaccharomyces pombe (strain 972 / ATCC 24843) (Fission yeast).